The sequence spans 179 residues: Large ribosomal subunit protein uL5 (179 aa).

Belongs to the universal ribosomal protein uL5 family. As to quaternary structure, part of the 50S ribosomal subunit; part of the 5S rRNA/L5/L18/L25 subcomplex. Contacts the 5S rRNA and the P site tRNA. Forms a bridge to the 30S subunit in the 70S ribosome.

This is one of the proteins that bind and probably mediate the attachment of the 5S RNA into the large ribosomal subunit, where it forms part of the central protuberance. In the 70S ribosome it contacts protein S13 of the 30S subunit (bridge B1b), connecting the 2 subunits; this bridge is implicated in subunit movement. Contacts the P site tRNA; the 5S rRNA and some of its associated proteins might help stabilize positioning of ribosome-bound tRNAs. In Enterobacter sp. (strain 638), this protein is Large ribosomal subunit protein uL5.